Reading from the N-terminus, the 247-residue chain is tRNA pseudouridine synthase A (247 aa).

Catalysis depends on aspartate 52, which acts as the Nucleophile. Tyrosine 113 contacts substrate.

The protein belongs to the tRNA pseudouridine synthase TruA family. As to quaternary structure, homodimer.

It carries out the reaction uridine(38/39/40) in tRNA = pseudouridine(38/39/40) in tRNA. Formation of pseudouridine at positions 38, 39 and 40 in the anticodon stem and loop of transfer RNAs. The polypeptide is tRNA pseudouridine synthase A (Sinorhizobium medicae (strain WSM419) (Ensifer medicae)).